Consider the following 154-residue polypeptide: Myoglobin (154 aa).

Residues 2–148 (GLSDGEWQLV…FRNDIAAKYK (147 aa)) form the Globin domain. Ser-4 carries the phosphoserine modification. His-65 contributes to the nitrite binding site. His-65 contacts O2. Position 68 is a phosphothreonine (Thr-68). Residue His-94 coordinates heme b.

Belongs to the globin family. In terms of assembly, monomeric.

Its subcellular location is the cytoplasm. The protein resides in the sarcoplasm. It catalyses the reaction Fe(III)-heme b-[protein] + nitric oxide + H2O = Fe(II)-heme b-[protein] + nitrite + 2 H(+). It carries out the reaction H2O2 + AH2 = A + 2 H2O. Monomeric heme protein which primary function is to store oxygen and facilitate its diffusion within muscle tissues. Reversibly binds oxygen through a pentacoordinated heme iron and enables its timely and efficient release as needed during periods of heightened demand. Depending on the oxidative conditions of tissues and cells, and in addition to its ability to bind oxygen, it also has a nitrite reductase activity whereby it regulates the production of bioactive nitric oxide. Under stress conditions, like hypoxia and anoxia, it also protects cells against reactive oxygen species thanks to its pseudoperoxidase activity. In Lutra lutra (European river otter), this protein is Myoglobin (MB).